Here is a 119-residue protein sequence, read N- to C-terminus: UPF0102 protein HI_1656 (119 aa).

The protein belongs to the UPF0102 family.

The polypeptide is UPF0102 protein HI_1656 (Haemophilus influenzae (strain ATCC 51907 / DSM 11121 / KW20 / Rd)).